Here is a 1017-residue protein sequence, read N- to C-terminus: Nonsense-mediated mRNA decay factor SMG5 (1017 aa).

An N-acetylserine modification is found at Ser-2. Residues Ser-2 and Ser-423 each carry the phosphoserine modification. Disordered regions lie at residues Gly-406–Ala-562 and Thr-597–Glu-640. Positions Lys-448–Pro-467 are enriched in basic residues. Low complexity predominate over residues Asp-486–Ser-496. Positions Ala-620–Gly-629 are enriched in acidic residues. A coiled-coil region spans residues Ala-798 to Glu-842. The region spanning Arg-873 to Ala-996 is the PINc domain.

In terms of assembly, interacts with TERT, PPP2CA and SMG1. Part of a complex that contains SMG1, SMG5, SMG7, PPP2CA, a short isoform of UPF3A (isoform UPF3AS, but not isoform UPF3AL) and phosphorylated UPF1. Not detected in complexes that contain unphosphorylated UPF1.

The protein localises to the cytoplasm. It is found in the nucleus. Functionally, plays a role in nonsense-mediated mRNA decay. Does not have RNase activity by itself. Promotes dephosphorylation of UPF1. Together with SMG7 is thought to provide a link to the mRNA degradation machinery involving exonucleolytic pathways, and to serve as an adapter for UPF1 to protein phosphatase 2A (PP2A), thereby triggering UPF1 dephosphorylation. Necessary for TERT activity. The polypeptide is Nonsense-mediated mRNA decay factor SMG5 (Mus musculus (Mouse)).